A 330-amino-acid chain; its full sequence is DNA-directed RNA polymerase subunit alpha (330 aa).

Residues Met-1–Lys-232 form an alpha N-terminal domain (alpha-NTD) region. Residues Glu-248–Glu-330 are alpha C-terminal domain (alpha-CTD).

It belongs to the RNA polymerase alpha chain family. In terms of assembly, homodimer. The RNAP catalytic core consists of 2 alpha, 1 beta, 1 beta' and 1 omega subunit. When a sigma factor is associated with the core the holoenzyme is formed, which can initiate transcription.

It catalyses the reaction RNA(n) + a ribonucleoside 5'-triphosphate = RNA(n+1) + diphosphate. Functionally, DNA-dependent RNA polymerase catalyzes the transcription of DNA into RNA using the four ribonucleoside triphosphates as substrates. The polypeptide is DNA-directed RNA polymerase subunit alpha (Bacteroides fragilis (strain ATCC 25285 / DSM 2151 / CCUG 4856 / JCM 11019 / LMG 10263 / NCTC 9343 / Onslow / VPI 2553 / EN-2)).